The primary structure comprises 393 residues: NAD(P)H-quinone oxidoreductase subunit H, chloroplastic (393 aa).

This sequence belongs to the complex I 49 kDa subunit family. NDH is composed of at least 16 different subunits, 5 of which are encoded in the nucleus.

The protein resides in the plastid. The protein localises to the chloroplast thylakoid membrane. The enzyme catalyses a plastoquinone + NADH + (n+1) H(+)(in) = a plastoquinol + NAD(+) + n H(+)(out). The catalysed reaction is a plastoquinone + NADPH + (n+1) H(+)(in) = a plastoquinol + NADP(+) + n H(+)(out). Its function is as follows. NDH shuttles electrons from NAD(P)H:plastoquinone, via FMN and iron-sulfur (Fe-S) centers, to quinones in the photosynthetic chain and possibly in a chloroplast respiratory chain. The immediate electron acceptor for the enzyme in this species is believed to be plastoquinone. Couples the redox reaction to proton translocation, and thus conserves the redox energy in a proton gradient. This Lotus japonicus (Lotus corniculatus var. japonicus) protein is NAD(P)H-quinone oxidoreductase subunit H, chloroplastic.